We begin with the raw amino-acid sequence, 629 residues long: Solute carrier family 22 member 14 (629 aa).

The segment at 1–21 (MKEDQNYKTAFGSQNSRDTHR) is disordered. Residues 1-67 (MKEDQNYKTA…IGEFGTFQWR (67 aa)) are Cytoplasmic-facing. Positions 7–16 (YKTAFGSQNS) are enriched in polar residues. Residues 68–88 (LVVLTFIPSILSTFFIFSHHF) traverse the membrane as a helical segment. Residues 89-183 (LLTAQRPYCN…LVCGNEPNKE (95 aa)) lie on the Extracellular side of the membrane. N-linked (GlcNAc...) asparagine glycans are attached at residues Asn98, Asn116, Asn124, and Asn149. The helical transmembrane segment at 184 to 204 (NGLTVFLSGVLTGSLLFGFLS) threads the bilayer. The Cytoplasmic segment spans residues 205–209 (DKLGR). The chain crosses the membrane as a helical span at residues 210-230 (YPIILLSLLGFLIFGFGTAFV). Residues 231–240 (SSFYQYLFFR) lie on the Extracellular side of the membrane. Residues 241–261 (FFVAQASVGYAICSVSLVMEW) traverse the membrane as a helical segment. The Cytoplasmic segment spans residues 262-269 (LVGEHRAQ). The chain crosses the membrane as a helical span at residues 270 to 290 (AVILQHSFLTIGVILLTGLAY). The Extracellular segment spans residues 291–295 (KVVHW). The helical transmembrane segment at 296–316 (RLLCLLGGMPMFPLICNIWVL) threads the bilayer. Residues 317–378 (RESPRWLMVR…DFCTNQHLFK (62 aa)) are Cytoplasmic-facing. Residues 379–399 (VVLAIGCVWFTVSYISFTLNL) traverse the membrane as a helical segment. The Extracellular portion of the chain corresponds to 400-409 (KMNDFGLDVY). A helical membrane pass occupies residues 410-430 (FVQMVRSIVAVPARLCCIILL). The Cytoplasmic segment spans residues 431-436 (EYFGRK). The helical transmembrane segment at 437–457 (WALNLTLFLVTSMCLFLLFLP) threads the bilayer. Residues 458 to 463 (QEPKST) are Extracellular-facing. Residues 464–484 (IILTLMLAEFSMAGTLSIFFI) form a helical membrane-spanning segment. Residues 485-496 (YTAELLPTVLRS) lie on the Cytoplasmic side of the membrane. The chain crosses the membrane as a helical span at residues 497–517 (TGLGMVSLAWVAGAISSVAIF). The Extracellular portion of the chain corresponds to 518–523 (KQTKTQ). The helical transmembrane segment at 524 to 544 (LPIFFCCLCCVLALCFSSLVP) threads the bilayer. Topologically, residues 545–629 (ETGSQSLRDS…PVQSLKAQPP (85 aa)) are cytoplasmic.

Belongs to the major facilitator (TC 2.A.1) superfamily. Organic cation transporter (TC 2.A.1.19) family. Testis-specific (at protein level). Specifically expressed in male germ cells (at protein level).

It is found in the mitochondrion inner membrane. Its subcellular location is the cell projection. The protein resides in the cilium. It localises to the flagellum membrane. It carries out the reaction riboflavin(in) = riboflavin(out). Its function is as follows. Riboflavin transporter localized at the inner mitochondrial membrane of the spermatozoa midpiece, which is required for male fertility. SLC22A14-mediated riboflavin transport is essential for spermatozoa energy generation and motility: riboflavin is the precursor of FMN and FAD, which are coenzymes of many enzymes in the TCA cycle (the citric acid cycle) in mitochondria. Required for sperm motility and normal sperm flagellar structure. The polypeptide is Solute carrier family 22 member 14 (Mus musculus (Mouse)).